The following is a 322-amino-acid chain: MDESHTIWIEKYRPAKLADIVGQDDIVERLSSYVKSGNLPHLLFTGSAGVGKTTAAVTLAREFFGDSWQMNFRELNASDERGIDVVRNQIKEFARTRPAGDAAFKILFLDEADALTTDAQAALRRTMESYAKTCRFILSCNYSSKIIDPIQSRCAIYRFRPLGPQAVKEEITRIAAREHLDVTPEAMDAMVYIAQGDMRKAINALQGAAILSATIEAPMVYAITSNARPEEIGELLTLSLSGDFDGAEALLTRLLRERGIAPNELINQCYRALTKRDMDRVLKVELIDALGETDFRLSEGASSDIQMEALIARFVLAGTRKR.

Glycine 46 to threonine 53 serves as a coordination point for ATP.

It belongs to the activator 1 small subunits family. RfcS subfamily. Heteromultimer composed of small subunits (RfcS) and large subunits (RfcL).

Functionally, part of the RFC clamp loader complex which loads the PCNA sliding clamp onto DNA. This is Replication factor C small subunit from Methanoregula boonei (strain DSM 21154 / JCM 14090 / 6A8).